Consider the following 394-residue polypeptide: Short-chain dehydrogenase/reductase family 42E member 1 (394 aa).

The active-site Proton acceptor is the Tyr-153. Residue Lys-157 participates in NAD(+) binding. The next 2 helical transmembrane spans lie at 283–303 and 367–387; these read LPLT…FIVG and FMLW…TWIL.

Belongs to the 3-beta-HSD family.

The protein localises to the membrane. This chain is Short-chain dehydrogenase/reductase family 42E member 1 (Sdr42e1), found in Mus musculus (Mouse).